We begin with the raw amino-acid sequence, 344 residues long: uncharacterized protein (344 aa).

NADP(+) is bound by residues K38 and Y167.

The protein belongs to the NAD(P)-dependent epimerase/dehydratase family. Dihydroflavonol-4-reductase subfamily.

This is an uncharacterized protein from Saccharomyces cerevisiae (strain ATCC 204508 / S288c) (Baker's yeast).